Consider the following 264-residue polypeptide: Indole-3-glycerol phosphate synthase (264 aa).

This sequence belongs to the TrpC family.

The catalysed reaction is 1-(2-carboxyphenylamino)-1-deoxy-D-ribulose 5-phosphate + H(+) = (1S,2R)-1-C-(indol-3-yl)glycerol 3-phosphate + CO2 + H2O. It participates in amino-acid biosynthesis; L-tryptophan biosynthesis; L-tryptophan from chorismate: step 4/5. In Carboxydothermus hydrogenoformans (strain ATCC BAA-161 / DSM 6008 / Z-2901), this protein is Indole-3-glycerol phosphate synthase.